The primary structure comprises 330 residues: Exostosin-like 2 (330 aa).

Residues 1 to 21 (MMRGCHICKLPGRVMGIRVLR) lie on the Cytoplasmic side of the membrane. Residues 22-42 (FSLVVILVLLLVAGALTNLLP) traverse the membrane as a helical; Signal-anchor for type II membrane protein segment. Over 43-330 (NIKEDKMLTL…FPYANHKSKM (288 aa)) the chain is Lumenal. Gln72 is a binding site for UDP-N-acetyl-alpha-D-galactosamine. Gln72 lines the UDP-N-acetyl-alpha-D-glucosamine pocket. N-linked (GlcNAc...) asparagine glycosylation occurs at Asn75. Residues Arg76, Asn101, Asn130, Arg135, Asp151, Asp152, Asp153, and Asp245 each coordinate UDP-N-acetyl-alpha-D-galactosamine. UDP-N-acetyl-alpha-D-glucosamine is bound by residues Arg76, Asn101, Asn130, Arg135, Asp151, Asp152, Asp153, Asp245, Asp246, and Arg293. Asp153 serves as a coordination point for Mn(2+). Cys244 and Cys296 are joined by a disulfide. Asp246 is a catalytic residue. Arg293 is a UDP-N-acetyl-alpha-D-galactosamine binding site.

It belongs to the glycosyltransferase 47 family. The cofactor is Mn(2+).

It is found in the endoplasmic reticulum membrane. The enzyme catalyses 3-O-(beta-D-GlcA-(1-&gt;3)-beta-D-Gal-(1-&gt;3)-beta-D-Gal-(1-&gt;4)-beta-D-Xyl)-L-seryl-[protein] + UDP-N-acetyl-alpha-D-glucosamine = 3-O-(alpha-D-GlcNAc-(1-&gt;4)-beta-D-GlcA-(1-&gt;3)-beta-D-Gal-(1-&gt;3)-beta-D-Gal-(1-&gt;4)-beta-D-Xyl)-L-seryl-[protein] + UDP + H(+). Its function is as follows. Glycosyltransferase required for the biosynthesis of heparan-sulfate and responsible for the alternating addition of beta-1-4-linked glucuronic acid (GlcA) and alpha-1-4-linked N-acetylglucosamine (GlcNAc) units to nascent heparan sulfate chains. The chain is Exostosin-like 2 (Extl2) from Mus musculus (Mouse).